A 436-amino-acid polypeptide reads, in one-letter code: Prenyltransferase nscD (436 aa).

Belongs to the tryptophan dimethylallyltransferase family.

It participates in secondary metabolite biosynthesis. Functionally, prenyltransferase; part of the gene cluster that mediates the biosynthesis of neosartoricin B, a prenylated anthracenone that probably exhibits T-cell antiproliferative activity, suggestive of a physiological role as an immunosuppressive agent. The non-reducing polyketide synthase nscA probably synthesizes and cyclizes the decaketide backbone. The hydrolase nscB then mediates the product release through hydrolysis followed by spontaneous decarboxylation. The prenyltransferase nscD catalyzes the addition of the dimethylallyl group to the aromatic C5. The FAD-dependent monooxygenase nscC is then responsible for the stereospecific hydroxylation at C2. Neosartoricin B can be converted into two additional compounds neosartoricins C and D. Neosartoricin C is a spirocyclic compound that is cyclized through the attack of C3 hydroxyl on C14, followed by dehydration. On the other hand, neosartoricin D is a further cyclized compound in which attack of C2 on C14 in neosartoricin C results in the formation of the acetal-containing dioxabicyclo-octanone ring. Both of these compounds are novel and possibly represent related metabolites of the gene cluster. The protein is Prenyltransferase nscD of Arthroderma benhamiae (strain ATCC MYA-4681 / CBS 112371) (Trichophyton mentagrophytes).